The chain runs to 613 residues: Phostensin (613 aa).

The segment covering 18–33 (EEASVRGREKAERERL) has biased composition (basic and acidic residues). Disordered regions lie at residues 18–231 (EEAS…SAYQ) and 266–500 (GEER…AVPG). Phosphoserine is present on residues Ser-54, Ser-125, Ser-133, Ser-175, and Ser-195. Basic and acidic residues-rich tracts occupy residues 104–154 (RSEE…ERRL) and 167–191 (LEARDWRQSPGEVGDRSSRLSEAWK). Position 199 is a phosphothreonine (Thr-199). The segment covering 199 to 221 (TPERSLRLAESREQSPRRKEVES) has biased composition (basic and acidic residues). Ser-224 carries the post-translational modification Phosphoserine. The span at 266-282 (GEERQDYSEECGRKEEW) shows a compositional bias: basic and acidic residues. The segment covering 295 to 309 (LSETLTREAQGNSSA) has biased composition (polar residues). Composition is skewed to basic and acidic residues over residues 314-327 (AEQRPVEDGERGMK), 340-350 (KAREWTPRDIE), and 357-366 (EPPESAEKLL). A phosphoserine mark is found at Ser-368 and Ser-432. The segment covering 424 to 446 (QPPPPAPLSPPPPAPTAPQPPGD) has biased composition (pro residues). The residue at position 457 (Lys-457) is an N6-acetyllysine. The segment covering 476–499 (PRRSVPPATPATPTSPATVDAAVP) has biased composition (low complexity). Ser-490 and Ser-530 each carry phosphoserine. Residues 552–595 (QYPSESSVLEELGPEPEVPSAPNPPAAQPDDEEDEEELLLLQPE) form a disordered region. A compositionally biased stretch (pro residues) spans 567 to 578 (PEVPSAPNPPAA). Acidic residues predominate over residues 580-589 (PDDEEDEEEL).

As to quaternary structure, interacts with Protein phosphatase 1 (PP1). Isoform 4 is predominantly expressed in leukocytes and spleen.

It localises to the cytoplasm. Its subcellular location is the cytoskeleton. In terms of biological role, may target protein phosphatase 1 to F-actin cytoskeleton. The sequence is that of Phostensin (PPP1R18) from Homo sapiens (Human).